Consider the following 358-residue polypeptide: Chorismate synthase (358 aa).

Residues Arg48 and Arg54 each contribute to the NADP(+) site. Residues 125 to 127, Gly282, 297 to 301, and Arg323 each bind FMN; these read RSS and KPPAS.

It belongs to the chorismate synthase family. In terms of assembly, homotetramer. The cofactor is FMNH2.

The enzyme catalyses 5-O-(1-carboxyvinyl)-3-phosphoshikimate = chorismate + phosphate. It participates in metabolic intermediate biosynthesis; chorismate biosynthesis; chorismate from D-erythrose 4-phosphate and phosphoenolpyruvate: step 7/7. Functionally, catalyzes the anti-1,4-elimination of the C-3 phosphate and the C-6 proR hydrogen from 5-enolpyruvylshikimate-3-phosphate (EPSP) to yield chorismate, which is the branch point compound that serves as the starting substrate for the three terminal pathways of aromatic amino acid biosynthesis. This reaction introduces a second double bond into the aromatic ring system. This Roseiflexus castenholzii (strain DSM 13941 / HLO8) protein is Chorismate synthase.